The sequence spans 127 residues: Fluoride-specific ion channel FluC 1 (127 aa).

4 helical membrane-spanning segments follow: residues 3 to 23 (LLIVAIGGGIGAIARYLVGQW), 35 to 55 (IAMLVVNLLGSFGLGAFFGLY), 74 to 94 (IGFFGAFTTYSTFSVEAVLLI), and 102 to 122 (LFSYVLLSIVGSIAAFLLGFY). Positions 78 and 81 each coordinate Na(+).

Belongs to the fluoride channel Fluc/FEX (TC 1.A.43) family.

It is found in the cell membrane. It catalyses the reaction fluoride(in) = fluoride(out). Na(+) is not transported, but it plays an essential structural role and its presence is essential for fluoride channel function. In terms of biological role, fluoride-specific ion channel. Important for reducing fluoride concentration in the cell, thus reducing its toxicity. The protein is Fluoride-specific ion channel FluC 1 of Halalkalibacterium halodurans (strain ATCC BAA-125 / DSM 18197 / FERM 7344 / JCM 9153 / C-125) (Bacillus halodurans).